A 632-amino-acid polypeptide reads, in one-letter code: MEFNKLQLSHCISFYISDVSEVFFESINQHPSRDFVNNILQKIKSTLSEEELEKLNTIEEVTKDEKILIMLNHVLKKIVSKTGSSSCDLFQIVKHDRFNEPVYIQSVNAFENNLINNEFAERRYDYLIEINKHSYLRKYVNAIRISFFLDLRAQILSGSFTLDVINKQLEHQNKEELFQAIYLRSLIKHFISNQLYPISLNSFIFGDKNRENKTVENDKLSVLKNNWNQIFFSKYFDFVAKNKEERVVDNNCDELFYATMNTLLIMLIIIEELRVYFNSKEPALILKLLDNKVSLREDPDQNPETDLHELIKFAEKNYLEKEKTSRWHKKRVKSLEELLEEIKQINLETKNESLAYPDEIVELELDNVHNFVSTKQVFRHQLDLQTLHGIVINPERYGIGMWSNHFVDWEEFKDLIEQITDAENGSDLYGFEKDLDESICQVNKKYLTFISSDSSSFLIIKNDQTKVISNYVWAQLYFETRRWIINDIEYDLYEKGFDKSHFASNIALLESLNFNWLDPFYGLTSIKEIMQKIDSKSNLKTSIAEMVAKFKHEQRISKKDNERVLMIFAYVAAAVVGFINFFSMVFTILTVSDLNAGLTPANIVVIAIASLLALFLIVIAVLFRFRWKYIKH.

4 consecutive transmembrane segments (helical) span residues 255 to 275 (LFYA…ELRV), 506 to 526 (IALL…LTSI), 566 to 586 (MIFA…SMVF), and 603 to 623 (IVVI…AVLF).

The protein localises to the cell membrane. This is an uncharacterized protein from Mycoplasma pneumoniae (strain ATCC 29342 / M129 / Subtype 1) (Mycoplasmoides pneumoniae).